The sequence spans 473 residues: UDP-N-acetylmuramate--L-alanine ligase (473 aa).

Residue 122–128 (GTHGKTT) participates in ATP binding.

It belongs to the MurCDEF family.

It localises to the cytoplasm. It carries out the reaction UDP-N-acetyl-alpha-D-muramate + L-alanine + ATP = UDP-N-acetyl-alpha-D-muramoyl-L-alanine + ADP + phosphate + H(+). It participates in cell wall biogenesis; peptidoglycan biosynthesis. Cell wall formation. The polypeptide is UDP-N-acetylmuramate--L-alanine ligase (Teredinibacter turnerae (strain ATCC 39867 / T7901)).